Consider the following 308-residue polypeptide: Thymidylate synthase (308 aa).

DUMP-binding positions include Arg-26 and 170-171 (RR). The active-site Nucleophile is the Cys-190. DUMP is bound by residues 210–213 (RSCD), Asn-221, and 251–253 (HVY). Asp-213 contributes to the (6R)-5,10-methylene-5,6,7,8-tetrahydrofolate binding site. Ala-307 contributes to the (6R)-5,10-methylene-5,6,7,8-tetrahydrofolate binding site.

It belongs to the thymidylate synthase family. Bacterial-type ThyA subfamily. Homodimer.

The protein localises to the cytoplasm. It catalyses the reaction dUMP + (6R)-5,10-methylene-5,6,7,8-tetrahydrofolate = 7,8-dihydrofolate + dTMP. The protein operates within pyrimidine metabolism; dTTP biosynthesis. Catalyzes the reductive methylation of 2'-deoxyuridine-5'-monophosphate (dUMP) to 2'-deoxythymidine-5'-monophosphate (dTMP) while utilizing 5,10-methylenetetrahydrofolate (mTHF) as the methyl donor and reductant in the reaction, yielding dihydrofolate (DHF) as a by-product. This enzymatic reaction provides an intracellular de novo source of dTMP, an essential precursor for DNA biosynthesis. This is Thymidylate synthase from Rhizorhabdus wittichii (strain DSM 6014 / CCUG 31198 / JCM 15750 / NBRC 105917 / EY 4224 / RW1) (Sphingomonas wittichii).